Consider the following 130-residue polypeptide: EG45-like domain containing protein 2 (130 aa).

The N-terminal stretch at 1-25 (MIKMAVKFVVVMIVFAQILAPIAEA) is a signal peptide. The 103-residue stretch at 28 to 130 (GKAVYYDPPY…GNIRVVYTPI (103 aa)) folds into the Expansin-like EG45 domain. A glycan (N-linked (GlcNAc...) asparagine) is linked at N106.

Expressed in unstressed leaves.

It is found in the secreted. Plays a systemic role in water and solute homeostasis. The protein is EG45-like domain containing protein 2 (EGC2) of Arabidopsis thaliana (Mouse-ear cress).